A 295-amino-acid chain; its full sequence is Probable isochorismatase (295 aa).

The interval 1-21 (MGIPKIAGYPLPTPAEFPDNR) is disordered. The Carrier domain maps to 207–286 (EIRSQKPLTL…EWWLVIEQAR (80 aa)). Position 247 is an O-(pantetheine 4'-phosphoryl)serine (Ser-247).

Belongs to the isochorismatase family. Pantetheine 4'-phosphate serves as cofactor.

It carries out the reaction isochorismate + H2O = (2S,3S)-2,3-dihydroxy-2,3-dihydrobenzoate + pyruvate. It participates in siderophore biosynthesis; vulnibactin biosynthesis. Functionally, involved in the biosynthesis of the catechol siderophore vulnibactin. Vulnibactin is a chelating compound involved in transporting iron from the bacterial environment into the cell cytoplasm. This Vibrio vulnificus (strain CMCP6) protein is Probable isochorismatase (venB).